The primary structure comprises 445 residues: 3-phosphoshikimate 1-carboxyvinyltransferase (445 aa).

3-phosphoshikimate-binding residues include Lys28, Ser29, and Arg33. Lys28 is a binding site for phosphoenolpyruvate. Phosphoenolpyruvate is bound by residues Gly102 and Arg130. Residues Ser179, Ser180, Gln181, Glu330, and His357 each contribute to the 3-phosphoshikimate site. Gln181 is a phosphoenolpyruvate binding site. Glu330 acts as the Proton acceptor in catalysis. Residues Arg361, Arg405, and Lys430 each coordinate phosphoenolpyruvate.

It belongs to the EPSP synthase family. Monomer.

The protein resides in the cytoplasm. It catalyses the reaction 3-phosphoshikimate + phosphoenolpyruvate = 5-O-(1-carboxyvinyl)-3-phosphoshikimate + phosphate. It participates in metabolic intermediate biosynthesis; chorismate biosynthesis; chorismate from D-erythrose 4-phosphate and phosphoenolpyruvate: step 6/7. Its function is as follows. Catalyzes the transfer of the enolpyruvyl moiety of phosphoenolpyruvate (PEP) to the 5-hydroxyl of shikimate-3-phosphate (S3P) to produce enolpyruvyl shikimate-3-phosphate and inorganic phosphate. The sequence is that of 3-phosphoshikimate 1-carboxyvinyltransferase from Bifidobacterium longum (strain DJO10A).